The sequence spans 356 residues: Histidinol-phosphate aminotransferase (356 aa).

K214 carries the post-translational modification N6-(pyridoxal phosphate)lysine.

The protein belongs to the class-II pyridoxal-phosphate-dependent aminotransferase family. Histidinol-phosphate aminotransferase subfamily. As to quaternary structure, homodimer. Pyridoxal 5'-phosphate serves as cofactor.

The enzyme catalyses L-histidinol phosphate + 2-oxoglutarate = 3-(imidazol-4-yl)-2-oxopropyl phosphate + L-glutamate. Its pathway is amino-acid biosynthesis; L-histidine biosynthesis; L-histidine from 5-phospho-alpha-D-ribose 1-diphosphate: step 7/9. This Escherichia coli O1:K1 / APEC protein is Histidinol-phosphate aminotransferase.